Reading from the N-terminus, the 440-residue chain is Ribosomal protein uS12 methylthiotransferase RimO (440 aa).

Positions 2–118 (KKAGIIHLGC…FVSLITSNGE (117 aa)) constitute an MTTase N-terminal domain. 6 residues coordinate [4Fe-4S] cluster: Cys-11, Cys-47, Cys-81, Cys-154, Cys-158, and Cys-161. Positions 140 to 370 (ISPNFWVYVK…MSTQKEISKK (231 aa)) constitute a Radical SAM core domain. In terms of domain architecture, TRAM spans 373 to 440 (AKLLGREFDV…RAYDLLGELV (68 aa)).

Belongs to the methylthiotransferase family. RimO subfamily. [4Fe-4S] cluster serves as cofactor.

The protein localises to the cytoplasm. The catalysed reaction is L-aspartate(89)-[ribosomal protein uS12]-hydrogen + (sulfur carrier)-SH + AH2 + 2 S-adenosyl-L-methionine = 3-methylsulfanyl-L-aspartate(89)-[ribosomal protein uS12]-hydrogen + (sulfur carrier)-H + 5'-deoxyadenosine + L-methionine + A + S-adenosyl-L-homocysteine + 2 H(+). In terms of biological role, catalyzes the methylthiolation of an aspartic acid residue of ribosomal protein uS12. This chain is Ribosomal protein uS12 methylthiotransferase RimO, found in Dictyoglomus thermophilum (strain ATCC 35947 / DSM 3960 / H-6-12).